A 1213-amino-acid chain; its full sequence is Filamin-A-interacting protein 1 (1213 aa).

The segment at M1–K70 is disordered. Basic and acidic residues predominate over residues T61 to K70. A Phosphoserine modification is found at S138. 2 coiled-coil regions span residues D192–C591 and P624–R781. 2 disordered regions span residues N878–V900 and K949–R976. Composition is skewed to polar residues over residues P880–P894 and V960–T970. The residue at position 979 (S979) is a Phosphoserine. The tract at residues V1103–G1213 is disordered. The segment covering V1125–S1138 has biased composition (low complexity). Residues A1139–T1156 are compositionally biased toward polar residues. Low complexity predominate over residues A1168 to G1179.

This sequence belongs to the FILIP1 family. As to quaternary structure, interacts with FLNA. Interacts with RHOD (in GTP-bound form). As to expression, moderately expressed in adult heart and brain. Weakly expressed in lung, skeletal muscle, ovary, testis, kidney, and fetal brain, and hardly detectable in liver, pancreas, spleen, and fetal liver. Within brain, moderate expression is found in amygdala and caudate nucleus. Expressed in skin fibroblasts.

It is found in the cytoplasm. Its subcellular location is the cytoskeleton. By acting through a filamin-A/F-actin axis, it controls the start of neocortical cell migration from the ventricular zone. May be able to induce the degradation of filamin-A. The protein is Filamin-A-interacting protein 1 (FILIP1) of Homo sapiens (Human).